Here is an 805-residue protein sequence, read N- to C-terminus: ATP-dependent RNA helicase mak-5 (805 aa).

Positions 1–10 (MAVDKKRKNT) are enriched in basic residues. 2 disordered regions span residues 1–33 (MAVDKKRKNTKAPASGPKRRKTQPSSKQIKRPV) and 79–189 (VPKS…ELET). Residues 85–100 (EVEDDGEEFGGFDDEE) are compositionally biased toward acidic residues. Composition is skewed to basic and acidic residues over residues 110-119 (QEVKTSETKA), 126-143 (AKEKKASKDQRKPKEQQK), and 164-189 (KNAEDKKKARKNEKTTVEPKDPELET). Residues 209–237 (SEWVPLDLSPRMISSIAKLRFSKPTVIQS) carry the Q motif motif. One can recognise a Helicase ATP-binding domain in the interval 240–463 (IPEIMAGHDV…AGKSKFKATS (224 aa)). ATP is bound at residue 253–260 (ASTGSGKT). A DEAD box motif is present at residues 372 to 375 (DEAD). Residues 390–406 (FKALDRPPVEENNEDQK) are compositionally biased toward basic and acidic residues. The interval 390–435 (FKALDRPPVEENNEDQKMGGTDEEGQEEEEEDSEEEEEEEEEHVNK) is disordered. Residues 410 to 431 (TDEEGQEEEEEDSEEEEEEEEE) show a composition bias toward acidic residues. Positions 510-666 (YLYATLMLQP…NSGNNTKKLV (157 aa)) constitute a Helicase C-terminal domain. The segment at 729-751 (AGKWGGKGSSKKQKQKEAQQMSK) is disordered.

Belongs to the DEAD box helicase family. DDX24/MAK5 subfamily.

The protein resides in the nucleus. Its subcellular location is the nucleolus. It catalyses the reaction ATP + H2O = ADP + phosphate + H(+). In terms of biological role, ATP-binding RNA helicase involved in the biogenesis of 60S ribosomal subunits and is required for the normal formation of 25S and 5.8S rRNAs. The protein is ATP-dependent RNA helicase mak-5 (mak-5) of Neurospora crassa (strain ATCC 24698 / 74-OR23-1A / CBS 708.71 / DSM 1257 / FGSC 987).